We begin with the raw amino-acid sequence, 81 residues long: Acyl carrier protein (81 aa).

The region spanning 4-79 (DEVYSRVRKI…DAVNYILSKK (76 aa)) is the Carrier domain. Ser-39 carries the post-translational modification O-(pantetheine 4'-phosphoryl)serine.

This sequence belongs to the acyl carrier protein (ACP) family. 4'-phosphopantetheine is transferred from CoA to a specific serine of apo-ACP by AcpS. This modification is essential for activity because fatty acids are bound in thioester linkage to the sulfhydryl of the prosthetic group.

It localises to the cytoplasm. Its pathway is lipid metabolism; fatty acid biosynthesis. Functionally, carrier of the growing fatty acid chain in fatty acid biosynthesis. This Synechococcus sp. (strain JA-3-3Ab) (Cyanobacteria bacterium Yellowstone A-Prime) protein is Acyl carrier protein.